The sequence spans 509 residues: H/ACA ribonucleoprotein complex subunit DKC1 (509 aa).

A disordered region spans residues 1–25 (MADAEAAMTFPKKHKKKKERKPLPE). An N-acetylalanine modification is found at Ala2. The tract at residues 2–22 (ADAEAAMTFPKKHKKKKERKP) is nucleolar localization. A compositionally biased stretch (basic residues) spans 11-20 (PKKHKKKKER). Residues Lys21, Lys40, and Lys44 each participate in a glycyl lysine isopeptide (Lys-Gly) (interchain with G-Cter in SUMO2) cross-link. Residue Asp126 is the Nucleophile of the active site. A Glycyl lysine isopeptide (Lys-Gly) (interchain with G-Cter in SUMO2) cross-link involves residue Lys192. In terms of domain architecture, PUA spans 297–372 (HKRLVMKDSA…VVAKIKRVIM (76 aa)). The disordered stretch occupies residues 381–509 (WGLGPKASQK…KARAAEELSG (129 aa)). Ser388 is modified (phosphoserine). Glycyl lysine isopeptide (Lys-Gly) (interchain with G-Cter in SUMO2) cross-links involve residues Lys395 and Lys425. Positions 416–425 (DYVDYSDSSK) are enriched in basic and acidic residues. A nuclear and nucleolar localization region spans residues 447–509 (KRKRDSDSDA…KARAAEELSG (63 aa)). Residues Ser452 and Ser454 each carry the phosphoserine modification. Thr460 bears the Phosphothreonine mark. The segment covering 466–475 (RVKKEKKKKK) has biased composition (basic residues). Residues 481-490 (GEEAAEDGDG) are compositionally biased toward acidic residues. Ser508 is subject to Phosphoserine.

The protein belongs to the pseudouridine synthase TruB family. As to quaternary structure, part of the H/ACA small nucleolar ribonucleoprotein (H/ACA snoRNP) complex, which contains NHP2/NOLA2, GAR1/NOLA1, NOP10/NOLA3, and DKC1/NOLA4, which is presumed to be the catalytic subunit. The complex contains a stable core formed by binding of one or two NOP10-DKC1 heterodimers to NHP2; GAR1 subsequently binds to this core via DKC1. The complex binds a box H/ACA small nucleolar RNA (snoRNA), which may target the specific site of modification within the RNA substrate. During assembly, the complex contains NAF1 instead of GAR1/NOLA1. The complex also interacts with TERC, which contains a 3'-terminal domain related to the box H/ACA snoRNAs. Specific interactions with snoRNAs or TERC are mediated by GAR1 and NHP2. Associates with NOLC1/NOPP140. H/ACA snoRNPs interact with the SMN complex, consisting of SMN1 or SMN2, GEMIN2/SIP1, DDX20/GEMIN3, and GEMIN4. This is mediated by interaction between GAR1 and SMN1 or SMN2. The SMN complex may be required for correct assembly of the H/ACA snoRNP complex. Component of the telomerase holoenzyme complex composed of one molecule of TERT, one molecule of WRAP53/TCAB1, two molecules of H/ACA ribonucleoprotein complex subunits DKC1, NOP10, NHP2 and GAR1, and a telomerase RNA template component (TERC). The telomerase holoenzyme complex is associated with TEP1, SMG6/EST1A and POT1. Interacts with SHQ1; this interaction may lead to the stabilization of DKC1, from the time of its synthesis until its association with NOP10, NHP2, and NAF1 at the nascent H/ACA RNA. Interacts with HMBOX1. Interacts with DHX36.

Its subcellular location is the nucleus. It localises to the nucleolus. It is found in the cajal body. It carries out the reaction uridine in 5S rRNA = pseudouridine in 5S rRNA. Its function is as follows. Catalytic subunit of H/ACA small nucleolar ribonucleoprotein (H/ACA snoRNP) complex, which catalyzes pseudouridylation of rRNA. This involves the isomerization of uridine such that the ribose is subsequently attached to C5, instead of the normal N1. Each rRNA can contain up to 100 pseudouridine ('psi') residues, which may serve to stabilize the conformation of rRNAs. Required for ribosome biogenesis and telomere maintenance. Also required for correct processing or intranuclear trafficking of TERC, the RNA component of the telomerase reverse transcriptase (TERT) holoenzyme. The chain is H/ACA ribonucleoprotein complex subunit DKC1 (Dkc1) from Rattus norvegicus (Rat).